Here is a 106-residue protein sequence, read N- to C-terminus: Nucleoid-associated protein Nwi_0368 (106 aa).

The protein belongs to the YbaB/EbfC family. As to quaternary structure, homodimer.

The protein resides in the cytoplasm. It localises to the nucleoid. Binds to DNA and alters its conformation. May be involved in regulation of gene expression, nucleoid organization and DNA protection. In Nitrobacter winogradskyi (strain ATCC 25391 / DSM 10237 / CIP 104748 / NCIMB 11846 / Nb-255), this protein is Nucleoid-associated protein Nwi_0368.